Consider the following 158-residue polypeptide: PRA1 family protein 2 (158 aa).

Helical transmembrane passes span 36-58, 62-79, 88-108, and 113-133; these read NLNFYSGNYIAIVAVVLLITLFT, LLVAILLLGAIGYYLFFV, FAVLTPMIQMVILGVVSVIVI, and GLTLFYTTLVSLLFVLAHSAL.

This sequence belongs to the PRA1 family.

It localises to the membrane. Functionally, may act as a general Rab protein regulator. The protein is PRA1 family protein 2 (prafB) of Dictyostelium discoideum (Social amoeba).